The primary structure comprises 442 residues: Putative pyrimidine permease RutG (442 aa).

Over 1 to 57 the chain is Cytoplasmic; it reads MAMFGFPHWQLKSTSTESGVVAPDERLPFAQTAVMGVQHAVAMFGATVLMPILMGLD. Residues 58-78 form a helical membrane-spanning segment; it reads PNLSILMSGIGTLLFFFITGG. Residue arginine 79 is a topological domain, periplasmic. The helical transmembrane segment at 80–100 threads the bilayer; the sequence is VPSYLGSSAAFVGVVIAATGF. Topologically, residues 101–110 are cytoplasmic; the sequence is NGQGINPNIS. A helical membrane pass occupies residues 111–131; it reads IALGGIIACGLVYTVIGLVVM. At 132–140 the chain is on the periplasmic side; that stretch reads KIGTRWIER. The chain crosses the membrane as a helical span at residues 141–161; that stretch reads LMPPVVTGAVVMAIGLNLAPI. The Cytoplasmic segment spans residues 162 to 169; it reads AVKSVSAS. A helical transmembrane segment spans residues 170 to 190; it reads AFDSWMAVMTVLCIGLVAVFT. Residues 191-196 lie on the Periplasmic side of the membrane; it reads RGMIQR. A helical membrane pass occupies residues 197–217; that stretch reads LLILVGLIVACLLYGVMTNVL. The Cytoplasmic portion of the chain corresponds to 218–240; it reads GLGKAVDFTLVSHAAWFGLPHFS. Residues 241–261 form a helical membrane-spanning segment; sequence TPAFNGQAMMLIAPVAVILVA. Topologically, residues 262-284 are periplasmic; sequence ENLGHLKAVAGMTGRNMDPYMGR. The chain crosses the membrane as a helical span at residues 285–305; it reads AFVGDGLATMLSGSVGGSGVT. Over 306–318 the chain is Cytoplasmic; sequence TYAENIGVMAVTK. A helical transmembrane segment spans residues 319–339; it reads VYSTLVFVAAAVIAMLLGFSP. Residues 340–347 lie on the Periplasmic side of the membrane; sequence KFGALIHT. A helical transmembrane segment spans residues 348–368; it reads IPAAVIGGASIVVFGLIAVAG. At 369–385 the chain is on the cytoplasmic side; that stretch reads ARIWVQNRVDLSQNGNL. 2 helical membrane-spanning segments follow: residues 386–406 and 407–427; these read IMVAVTLVLGAGDFALTLGGF and TLGGIGTATFGAILLNALLSR. Topologically, residues 428 to 442 are cytoplasmic; the sequence is KLVDVPPPEVVHQEP.

It belongs to the nucleobase:cation symporter-2 (NCS2) (TC 2.A.40) family.

It is found in the cell inner membrane. Functionally, may function as a proton-driven pyrimidine uptake system. The sequence is that of Putative pyrimidine permease RutG (rutG) from Escherichia coli (strain K12).